The primary structure comprises 429 residues: 3-phosphoshikimate 1-carboxyvinyltransferase (429 aa).

3-phosphoshikimate contacts are provided by lysine 11, serine 12, and arginine 16. Lysine 11 contributes to the phosphoenolpyruvate binding site. Phosphoenolpyruvate contacts are provided by glycine 82 and arginine 110. Residues serine 155, glutamine 157, aspartate 302, and lysine 329 each contribute to the 3-phosphoshikimate site. Position 157 (glutamine 157) interacts with phosphoenolpyruvate. The active-site Proton acceptor is the aspartate 302. Phosphoenolpyruvate-binding residues include arginine 333 and arginine 385.

This sequence belongs to the EPSP synthase family. As to quaternary structure, monomer.

It localises to the cytoplasm. The enzyme catalyses 3-phosphoshikimate + phosphoenolpyruvate = 5-O-(1-carboxyvinyl)-3-phosphoshikimate + phosphate. The protein operates within metabolic intermediate biosynthesis; chorismate biosynthesis; chorismate from D-erythrose 4-phosphate and phosphoenolpyruvate: step 6/7. Functionally, catalyzes the transfer of the enolpyruvyl moiety of phosphoenolpyruvate (PEP) to the 5-hydroxyl of shikimate-3-phosphate (S3P) to produce enolpyruvyl shikimate-3-phosphate and inorganic phosphate. In Helicobacter pylori (strain P12), this protein is 3-phosphoshikimate 1-carboxyvinyltransferase.